The following is a 56-amino-acid chain: Small ribosomal subunit protein uS14 (56 aa).

Serine 9 is modified (phosphoserine). Arginine 12 carries the post-translational modification Omega-N-methylarginine. Zn(2+) contacts are provided by cysteine 21, cysteine 24, cysteine 39, and cysteine 42. Lysine 48 carries the N6-acetyllysine modification.

It belongs to the universal ribosomal protein uS14 family. Component of the 40S small ribosomal subunit. Zn(2+) is required as a cofactor.

Its subcellular location is the cytoplasm. The protein resides in the cytosol. It localises to the rough endoplasmic reticulum. Its function is as follows. Component of the small ribosomal subunit. The ribosome is a large ribonucleoprotein complex responsible for the synthesis of proteins in the cell. The chain is Small ribosomal subunit protein uS14 (RPS29) from Sus scrofa (Pig).